We begin with the raw amino-acid sequence, 395 residues long: Terminal nucleotidyltransferase 5B (395 aa).

The protein belongs to the TENT family.

It localises to the cytoplasm. Its subcellular location is the nucleus. The enzyme catalyses RNA(n) + ATP = RNA(n)-3'-adenine ribonucleotide + diphosphate. Catalyzes the transfer of one adenosine molecule from an ATP to an mRNA poly(A) tail bearing a 3'-OH terminal group in an ATP hydrolysis-dependent manner and participates in cytoplasmic polyadenylation. May be involved in maintaining the translation efficiency of at least some genes through preventing degradation of their mRNAs. The protein is Terminal nucleotidyltransferase 5B of Xenopus tropicalis (Western clawed frog).